We begin with the raw amino-acid sequence, 757 residues long: 5-methyltetrahydropteroyltriglutamate--homocysteine methyltransferase (757 aa).

5-methyltetrahydropteroyltri-L-glutamate is bound by residues 16-19 (RELK) and K112. Residues 432 to 434 (IGS) and E485 contribute to the L-homocysteine site. Residues 432-434 (IGS) and E485 each bind L-methionine. 5-methyltetrahydropteroyltri-L-glutamate-binding positions include 516 to 517 (RC) and W562. D600 lines the L-homocysteine pocket. Residue D600 coordinates L-methionine. E606 contacts 5-methyltetrahydropteroyltri-L-glutamate. Zn(2+) is bound by residues H642, C644, and E666. H695 serves as the catalytic Proton donor. C727 serves as a coordination point for Zn(2+).

This sequence belongs to the vitamin-B12 independent methionine synthase family. The cofactor is Zn(2+).

The catalysed reaction is 5-methyltetrahydropteroyltri-L-glutamate + L-homocysteine = tetrahydropteroyltri-L-glutamate + L-methionine. Its pathway is amino-acid biosynthesis; L-methionine biosynthesis via de novo pathway; L-methionine from L-homocysteine (MetE route): step 1/1. Catalyzes the transfer of a methyl group from 5-methyltetrahydrofolate to homocysteine resulting in methionine formation. The polypeptide is 5-methyltetrahydropteroyltriglutamate--homocysteine methyltransferase (Actinobacillus pleuropneumoniae serotype 7 (strain AP76)).